Reading from the N-terminus, the 148-residue chain is Lysozyme C (148 aa).

Positions 1–18 are cleaved as a signal peptide; the sequence is MKVLVILGLVLLSVMVQG. Residues 19-148 form the C-type lysozyme domain; sequence KVFERCELAR…VSQYVQGCGV (130 aa). Cystine bridges form between C24–C146, C48–C134, C83–C99, and C95–C113. Residues E53 and D71 contribute to the active site.

Belongs to the glycosyl hydrolase 22 family. In terms of assembly, monomer.

It is found in the secreted. It carries out the reaction Hydrolysis of (1-&gt;4)-beta-linkages between N-acetylmuramic acid and N-acetyl-D-glucosamine residues in a peptidoglycan and between N-acetyl-D-glucosamine residues in chitodextrins.. Lysozymes have primarily a bacteriolytic function; those in tissues and body fluids are associated with the monocyte-macrophage system and enhance the activity of immunoagents. The protein is Lysozyme C (LYZ) of Saimiri sciureus (Common squirrel monkey).